The chain runs to 515 residues: Maturase K (515 aa).

Belongs to the intron maturase 2 family. MatK subfamily.

It is found in the plastid. The protein localises to the chloroplast. In terms of biological role, usually encoded in the trnK tRNA gene intron. Probably assists in splicing its own and other chloroplast group II introns. In Ceratophyllum demersum (Rigid hornwort), this protein is Maturase K.